Here is a 135-residue protein sequence, read N- to C-terminus: Large ribosomal subunit protein bL17 (135 aa).

The protein belongs to the bacterial ribosomal protein bL17 family. Part of the 50S ribosomal subunit. Contacts protein L32.

The polypeptide is Large ribosomal subunit protein bL17 (Rhodopseudomonas palustris (strain BisB18)).